A 100-amino-acid chain; its full sequence is Putative membrane protein insertion efficiency factor (100 aa).

Residues 73 to 100 (DPVPDLPGSAPEENGRPSPDGQHSGSGG) are disordered.

Belongs to the UPF0161 family.

The protein localises to the cell inner membrane. Could be involved in insertion of integral membrane proteins into the membrane. This is Putative membrane protein insertion efficiency factor from Synechococcus sp. (strain JA-3-3Ab) (Cyanobacteria bacterium Yellowstone A-Prime).